The following is a 332-amino-acid chain: UDP-N-acetylenolpyruvoylglucosamine reductase (332 aa).

The region spanning 15–184 (IDVSAACFLE…TYVSFRLSKR (170 aa)) is the FAD-binding PCMH-type domain. The active site involves R160. Residue S232 is the Proton donor of the active site. The active site involves E328.

The protein belongs to the MurB family. FAD serves as cofactor.

The protein localises to the cytoplasm. It catalyses the reaction UDP-N-acetyl-alpha-D-muramate + NADP(+) = UDP-N-acetyl-3-O-(1-carboxyvinyl)-alpha-D-glucosamine + NADPH + H(+). It functions in the pathway cell wall biogenesis; peptidoglycan biosynthesis. Its function is as follows. Cell wall formation. This chain is UDP-N-acetylenolpyruvoylglucosamine reductase, found in Bacteroides fragilis (strain YCH46).